The primary structure comprises 246 residues: tRNA (guanine-N(1)-)-methyltransferase (246 aa).

Position 114 (Gly-114) interacts with S-adenosyl-L-methionine.

Belongs to the RNA methyltransferase TrmD family. As to quaternary structure, homodimer.

It localises to the cytoplasm. The enzyme catalyses guanosine(37) in tRNA + S-adenosyl-L-methionine = N(1)-methylguanosine(37) in tRNA + S-adenosyl-L-homocysteine + H(+). Its function is as follows. Specifically methylates guanosine-37 in various tRNAs. This is tRNA (guanine-N(1)-)-methyltransferase from Novosphingobium aromaticivorans (strain ATCC 700278 / DSM 12444 / CCUG 56034 / CIP 105152 / NBRC 16084 / F199).